Here is a 104-residue protein sequence, read N- to C-terminus: Large ribosomal subunit protein uL23 (104 aa).

Belongs to the universal ribosomal protein uL23 family. Part of the 50S ribosomal subunit. Contacts protein L29, and trigger factor when it is bound to the ribosome.

Its function is as follows. One of the early assembly proteins it binds 23S rRNA. One of the proteins that surrounds the polypeptide exit tunnel on the outside of the ribosome. Forms the main docking site for trigger factor binding to the ribosome. The sequence is that of Large ribosomal subunit protein uL23 from Trichormus variabilis (strain ATCC 29413 / PCC 7937) (Anabaena variabilis).